The primary structure comprises 1040 residues: Eukaryotic translation initiation factor 3 subunit A (1040 aa).

Residues 92–121 are a coiled coil; it reads LKKFIELAEKKVTEAQTKADEIQSSLESAA. The PCI domain occupies 339–523; sequence MTKAASFVLL…GVLTFDSDVF (185 aa). Residues 608 to 906 adopt a coiled-coil conformation; sequence RVIIEKKKEA…AEARRAARKA (299 aa). Basic and acidic residues-rich tracts occupy residues 617–632 and 795–901; these read AATD…EETR and EVSE…EARR. Disordered stretches follow at residues 617 to 641 and 795 to 1040; these read AATD…QQLQ and EVSE…QQNQ. 4 stretches are compositionally biased toward low complexity: residues 908–917, 945–955, 978–993, and 1004–1018; these read LEPAAPAARP, KEAAGGAAPEA, SGSS…NGAP, and SSSS…TPGS.

This sequence belongs to the eIF-3 subunit A family. As to quaternary structure, component of the eukaryotic translation initiation factor 3 (eIF-3) complex.

Its subcellular location is the cytoplasm. Its function is as follows. RNA-binding component of the eukaryotic translation initiation factor 3 (eIF-3) complex, which is involved in protein synthesis of a specialized repertoire of mRNAs and, together with other initiation factors, stimulates binding of mRNA and methionyl-tRNAi to the 40S ribosome. The eIF-3 complex specifically targets and initiates translation of a subset of mRNAs involved in cell proliferation. This is Eukaryotic translation initiation factor 3 subunit A (tif32) from Aspergillus terreus (strain NIH 2624 / FGSC A1156).